A 394-amino-acid polypeptide reads, in one-letter code: Elongation factor Tu (394 aa).

Positions 10–205 (KPHVNIGTIG…VDTWIPLPPR (196 aa)) constitute a tr-type G domain. A G1 region spans residues 19–26 (GHVDHGKT). 19 to 26 (GHVDHGKT) is a binding site for GTP. Thr26 is a Mg(2+) binding site. A G2 region spans residues 60-64 (GITIN). A G3 region spans residues 81-84 (DCPG). GTP is bound by residues 81–85 (DCPGH) and 136–139 (NKCD). Residues 136-139 (NKCD) form a G4 region. The segment at 174–176 (SAL) is G5.

Belongs to the TRAFAC class translation factor GTPase superfamily. Classic translation factor GTPase family. EF-Tu/EF-1A subfamily. As to quaternary structure, monomer.

Its subcellular location is the cytoplasm. The enzyme catalyses GTP + H2O = GDP + phosphate + H(+). In terms of biological role, GTP hydrolase that promotes the GTP-dependent binding of aminoacyl-tRNA to the A-site of ribosomes during protein biosynthesis. This is Elongation factor Tu from Phocaeicola vulgatus (strain ATCC 8482 / DSM 1447 / JCM 5826 / CCUG 4940 / NBRC 14291 / NCTC 11154) (Bacteroides vulgatus).